The sequence spans 121 residues: Phosphoribosyl-ATP pyrophosphatase (121 aa).

Belongs to the PRA-PH family.

It is found in the cytoplasm. It catalyses the reaction 1-(5-phospho-beta-D-ribosyl)-ATP + H2O = 1-(5-phospho-beta-D-ribosyl)-5'-AMP + diphosphate + H(+). The protein operates within amino-acid biosynthesis; L-histidine biosynthesis; L-histidine from 5-phospho-alpha-D-ribose 1-diphosphate: step 2/9. The chain is Phosphoribosyl-ATP pyrophosphatase from Burkholderia multivorans (strain ATCC 17616 / 249).